The following is a 325-amino-acid chain: HTH-type transcriptional regulator BbuR (325 aa).

The HTH lysR-type domain occupies 15-72 (LDTDLLNVFCWVAKTQSFSRAAAELGTSQPVITRKIGRLEECLGVALFVRSNRGCVLT). A DNA-binding region (H-T-H motif) is located at residues 32–51 (FSRAAAELGTSQPVITRKIG).

The protein belongs to the LysR transcriptional regulatory family.

The sequence is that of HTH-type transcriptional regulator BbuR (bbuR) from Bordetella bronchiseptica (strain ATCC BAA-588 / NCTC 13252 / RB50) (Alcaligenes bronchisepticus).